Consider the following 177-residue polypeptide: Large ribosomal subunit protein uL6 (177 aa).

The protein belongs to the universal ribosomal protein uL6 family. In terms of assembly, part of the 50S ribosomal subunit.

Its function is as follows. This protein binds to the 23S rRNA, and is important in its secondary structure. It is located near the subunit interface in the base of the L7/L12 stalk, and near the tRNA binding site of the peptidyltransferase center. This chain is Large ribosomal subunit protein uL6, found in Pseudomonas fluorescens (strain ATCC BAA-477 / NRRL B-23932 / Pf-5).